A 242-amino-acid polypeptide reads, in one-letter code: 4-hydroxy-tetrahydrodipicolinate reductase (242 aa).

NAD(+) is bound by residues 8 to 13, 75 to 77, and 99 to 102; these read GAKGRM, GTT, and ATNM. The active-site Proton donor/acceptor is the His131. His132 contributes to the (S)-2,3,4,5-tetrahydrodipicolinate binding site. Residue Lys135 is the Proton donor of the active site. Residue 141 to 142 participates in (S)-2,3,4,5-tetrahydrodipicolinate binding; that stretch reads GT.

Belongs to the DapB family.

The protein resides in the cytoplasm. The catalysed reaction is (S)-2,3,4,5-tetrahydrodipicolinate + NAD(+) + H2O = (2S,4S)-4-hydroxy-2,3,4,5-tetrahydrodipicolinate + NADH + H(+). The enzyme catalyses (S)-2,3,4,5-tetrahydrodipicolinate + NADP(+) + H2O = (2S,4S)-4-hydroxy-2,3,4,5-tetrahydrodipicolinate + NADPH + H(+). Its pathway is amino-acid biosynthesis; L-lysine biosynthesis via DAP pathway; (S)-tetrahydrodipicolinate from L-aspartate: step 4/4. Its function is as follows. Catalyzes the conversion of 4-hydroxy-tetrahydrodipicolinate (HTPA) to tetrahydrodipicolinate. This is 4-hydroxy-tetrahydrodipicolinate reductase from Campylobacter jejuni subsp. jejuni serotype O:6 (strain 81116 / NCTC 11828).